Here is a 430-residue protein sequence, read N- to C-terminus: Histidine--tRNA ligase (430 aa).

Belongs to the class-II aminoacyl-tRNA synthetase family. As to quaternary structure, homodimer.

The protein localises to the cytoplasm. The enzyme catalyses tRNA(His) + L-histidine + ATP = L-histidyl-tRNA(His) + AMP + diphosphate + H(+). The chain is Histidine--tRNA ligase from Anaplasma marginale (strain Florida).